The following is a 512-amino-acid chain: MESVIFSINGEIIQVNKEIITASPYNFFKRIQEHHINDEAIILNGINYHAFESLLDYMRWKKINITVNNVEMILVAAVIIDIPPVVDLCVKTMIHNINSTNCIRMFNFSKRYGIKKLYNASMLEIINNITAVTSDPEFGKLSKDELTTILSHENVNVNHEDVTAMILLKWIHKNPNDVDIINILHPKFMTNTMCNAISLLGLTISKSTKPVTRNGIKHNIVVIKNSDYISTITHYSPRTEYWTIVGNTDRQFYNANVLYNCLYIIGGMINNRHVYSVSRVDLKTKKWKTVTNMSSLKSEVSTCVNDGKLYVIGGLEFSISTGVAEYLKHGTSKWIRLPNLITPRYSGASVFVNDDIYVMGGVYTTYEKYVVLNDVECFTKNRWIKKSPMPRHHSIVYAIEYDGDIYAITGITHETRNYLYKYIVKEDKWIELYMYFNHVGKMFVCSCGDYILIIADAKYEYYPKSNTWILFDMSTRNIEYYDMFTKDETPKCNVTHKSLPSFLSNCEKQFLQ.

Residues 2–67 (ESVIFSINGE…MRWKKINITV (66 aa)) enclose the BTB domain. A BACK domain is found at 102–176 (CIRMFNFSKR…LLKWIHKNPN (75 aa)). 6 Kelch repeats span residues 216 to 261 (IKHN…LYNC), 262 to 307 (LYII…VNDG), 309 to 354 (LYVI…FVND), 356 to 403 (IYVM…EYDG), 405 to 449 (IYAI…SCGD), and 452 to 498 (LIIA…THKS).

Belongs to the poxviruses Kelch family.

The chain is Kelch repeat protein C2 from Camelus.